Consider the following 417-residue polypeptide: NADH-quinone oxidoreductase subunit D (417 aa).

The protein belongs to the complex I 49 kDa subunit family. As to quaternary structure, NDH-1 is composed of 14 different subunits. Subunits NuoB, C, D, E, F, and G constitute the peripheral sector of the complex.

It is found in the cell inner membrane. The enzyme catalyses a quinone + NADH + 5 H(+)(in) = a quinol + NAD(+) + 4 H(+)(out). Its function is as follows. NDH-1 shuttles electrons from NADH, via FMN and iron-sulfur (Fe-S) centers, to quinones in the respiratory chain. The immediate electron acceptor for the enzyme in this species is believed to be ubiquinone. Couples the redox reaction to proton translocation (for every two electrons transferred, four hydrogen ions are translocated across the cytoplasmic membrane), and thus conserves the redox energy in a proton gradient. The sequence is that of NADH-quinone oxidoreductase subunit D from Burkholderia thailandensis (strain ATCC 700388 / DSM 13276 / CCUG 48851 / CIP 106301 / E264).